A 335-amino-acid chain; its full sequence is MKLIDSYAVLEKIRDLIYSLLEARDRAMENGLEVIPVRTATPLVRYGFISMLKGGVVMDVTNEQQAEIAEDAGAVGVMVLDKLPYDVRKAGGVARTADLNVIRAVMETITIPVSAKCRIGHYWEAKLLEEIGVDLIDESEVLTPTDEKAHIWKWEFRVPFVNGARSLPEALRRIWEGASMIRTKGEAGTGNVAEAVRHMKAVNRDIAVLRGYYKAGDIEAIRLYAKSNNVPFELALLTARLGRLPVVNFAAGGIATPADAALMMWLGADGVFVGSGIFKSRDPEQRAQAIVLATTYWDDPETVAEAQSMVSERNAMPGIDITRLKPEELLQIRGE.

D-ribose 5-phosphate is bound at residue D59. K116 acts as the Schiff-base intermediate with D-ribose 5-phosphate in catalysis. G188 contacts D-ribose 5-phosphate. Position 200 (K200) interacts with D-glyceraldehyde 3-phosphate. D-ribose 5-phosphate-binding positions include G253 and 274–275; that span reads GS.

Belongs to the PdxS/SNZ family. In the presence of PdxT, forms a dodecamer of heterodimers.

It carries out the reaction aldehydo-D-ribose 5-phosphate + D-glyceraldehyde 3-phosphate + L-glutamine = pyridoxal 5'-phosphate + L-glutamate + phosphate + 3 H2O + H(+). The protein operates within cofactor biosynthesis; pyridoxal 5'-phosphate biosynthesis. Its function is as follows. Catalyzes the formation of pyridoxal 5'-phosphate from ribose 5-phosphate (RBP), glyceraldehyde 3-phosphate (G3P) and ammonia. The ammonia is provided by the PdxT subunit. Can also use ribulose 5-phosphate and dihydroxyacetone phosphate as substrates, resulting from enzyme-catalyzed isomerization of RBP and G3P, respectively. This chain is Pyridoxal 5'-phosphate synthase subunit PdxS, found in Hyperthermus butylicus (strain DSM 5456 / JCM 9403 / PLM1-5).